A 278-amino-acid chain; its full sequence is Large ribosomal subunit protein uL2 (278 aa).

2 disordered regions span residues 26–57 (RSTP…QGGG) and 225–278 (VMNP…NKKR). Residues 258 to 278 (RSPKKASNKYIVRRRKTNKKR) are compositionally biased toward basic residues.

Belongs to the universal ribosomal protein uL2 family. In terms of assembly, part of the 50S ribosomal subunit. Forms a bridge to the 30S subunit in the 70S ribosome.

Functionally, one of the primary rRNA binding proteins. Required for association of the 30S and 50S subunits to form the 70S ribosome, for tRNA binding and peptide bond formation. It has been suggested to have peptidyltransferase activity; this is somewhat controversial. Makes several contacts with the 16S rRNA in the 70S ribosome. The sequence is that of Large ribosomal subunit protein uL2 from Streptomyces coelicolor (strain ATCC BAA-471 / A3(2) / M145).